The following is a 348-amino-acid chain: Isopentenyl-diphosphate delta-isomerase (348 aa).

11-12 (RK) lines the substrate pocket. Residues 70 to 72 (AMT), Ser100, and Asn131 each bind FMN. 100-102 (SQR) is a binding site for substrate. A substrate-binding site is contributed by Gln165. Glu166 is a binding site for Mg(2+). Residues Lys197, Thr231, 278–280 (GIR), and 299–300 (AR) contribute to the FMN site.

This sequence belongs to the IPP isomerase type 2 family. In terms of assembly, homooctamer. Dimer of tetramers. Requires FMN as cofactor. NADPH is required as a cofactor. It depends on Mg(2+) as a cofactor.

It is found in the cytoplasm. The enzyme catalyses isopentenyl diphosphate = dimethylallyl diphosphate. Functionally, involved in the biosynthesis of isoprenoids. Catalyzes the 1,3-allylic rearrangement of the homoallylic substrate isopentenyl (IPP) to its allylic isomer, dimethylallyl diphosphate (DMAPP). The protein is Isopentenyl-diphosphate delta-isomerase of Mycobacterium marinum (strain ATCC BAA-535 / M).